A 205-amino-acid chain; its full sequence is Protein GrpE (205 aa).

A compositionally biased stretch (basic and acidic residues) spans 1-18; it reads MSEEVKNSVETEENKASK. Residues 1 to 60 are disordered; sequence MSEEVKNSVETEENKASKDNATQAPNPTENHNTAQETEKAENSEKTESATQENESLDKLK. Residues 19–35 are compositionally biased toward polar residues; sequence DNATQAPNPTENHNTAQ. A compositionally biased stretch (basic and acidic residues) spans 36 to 47; the sequence is ETEKAENSEKTE.

This sequence belongs to the GrpE family. In terms of assembly, homodimer.

It localises to the cytoplasm. Participates actively in the response to hyperosmotic and heat shock by preventing the aggregation of stress-denatured proteins, in association with DnaK and GrpE. It is the nucleotide exchange factor for DnaK and may function as a thermosensor. Unfolded proteins bind initially to DnaJ; upon interaction with the DnaJ-bound protein, DnaK hydrolyzes its bound ATP, resulting in the formation of a stable complex. GrpE releases ADP from DnaK; ATP binding to DnaK triggers the release of the substrate protein, thus completing the reaction cycle. Several rounds of ATP-dependent interactions between DnaJ, DnaK and GrpE are required for fully efficient folding. This chain is Protein GrpE, found in Chloroherpeton thalassium (strain ATCC 35110 / GB-78).